We begin with the raw amino-acid sequence, 308 residues long: tRNA pseudouridine synthase B (308 aa).

The Nucleophile role is filled by D49.

The protein belongs to the pseudouridine synthase TruB family. Type 1 subfamily.

The enzyme catalyses uridine(55) in tRNA = pseudouridine(55) in tRNA. Its function is as follows. Responsible for synthesis of pseudouridine from uracil-55 in the psi GC loop of transfer RNAs. The polypeptide is tRNA pseudouridine synthase B (Corynebacterium jeikeium (strain K411)).